The chain runs to 686 residues: MIVSMDVIKRVYQYAEPNLSLVGWMGMLGFPAYYFIWEYWFPQSYENLGLRCAAAVLFGGLVFRDSMPKKWQRYMPGYFLFTIGFCLPFFFAFMMLMNDWSTIWAMSFMASIFLHILLVHDTRVMALQALFSVLVAYLAVYGLTDFHPTTLIEWQYIPIFLFTYVFGNLCFFRNQISHETKVSIAKTFGAGIAHEMRNPLSALKTSIDVVRTMIPKPQTAAHTDYSLDAQELDLLHQILNEADDVIYSGNNAIDLLLTSIDENRVSPASFKKHSVVDVIEKAVKTFPYKNAADQHSVELEVHQPFDFFGSDTLLTYALFNLLKNAFYYQKEHFSVCISIEQTSEHNLIRVRDNGVGIAPEMLEDIFRDFYTFGKNGSYGLGLPFCRKVMSAFGGTIRCASQQGQWTEFVLSFPRYDSDTVNEIKTELLKTKSLIYIGSNQAIVRELNQLAVEDEFGFTAISAQQAVRRQDYEFEFDLILLDLDDATAQGELLPKLEGTLSFAEGCIGYVYDPGKTYAVNINRYLRIQPISIHSILRKPRKIIERLLFEQESLSMNRNVIPLQKSRHERRILVVDDNQSIRTFTAILLEQQGYEVVQANDGSEVLKHMESQNIDLVLMDIEMPNVGGLEATRLIRNSEHEYKNIPIIGYTGDNSPKTLALVQTSGMNDFIVKPADRDVLLNKVAAWV.

The next 6 helical transmembrane spans lie at 21 to 41, 47 to 64, 77 to 97, 100 to 120, 124 to 144, and 152 to 172; these read LVGWMGMLGFPAYYFIWEYWF, NLGLRCAAAVLFGGLVFR, GYFLFTIGFCLPFFFAFMMLM, WSTIWAMSFMASIFLHILLVH, VMALQALFSVLVAYLAVYGLT, and IEWQYIPIFLFTYVFGNLCFF. One can recognise a Histidine kinase domain in the interval 191–416; that stretch reads GIAHEMRNPL…EFVLSFPRYD (226 aa). His194 carries the post-translational modification Phosphohistidine; by autocatalysis. Positions 569-686 constitute a Response regulatory domain; that stretch reads RILVVDDNQS…VLLNKVAAWV (118 aa). A 4-aspartylphosphate modification is found at Asp618.

Its subcellular location is the cell membrane. It carries out the reaction ATP + protein L-histidine = ADP + protein N-phospho-L-histidine.. Senses the quorum-sensing autoinducer CAI-1 ((S)-3-hydroxytridecan-4-one) which probably functions as an intragenus signal. The sensory signal is then relayed to LuxU and LuxO. This is CAI-1 autoinducer sensor kinase/phosphatase CqsS (cqsS) from Vibrio cholerae serotype O1 (strain ATCC 39315 / El Tor Inaba N16961).